Reading from the N-terminus, the 179-residue chain is Large ribosomal subunit protein uL5 (179 aa).

It belongs to the universal ribosomal protein uL5 family. Part of the 50S ribosomal subunit; part of the 5S rRNA/L5/L18/L25 subcomplex. Contacts the 5S rRNA and the P site tRNA. Forms a bridge to the 30S subunit in the 70S ribosome.

Its function is as follows. This is one of the proteins that bind and probably mediate the attachment of the 5S RNA into the large ribosomal subunit, where it forms part of the central protuberance. In the 70S ribosome it contacts protein S13 of the 30S subunit (bridge B1b), connecting the 2 subunits; this bridge is implicated in subunit movement. Contacts the P site tRNA; the 5S rRNA and some of its associated proteins might help stabilize positioning of ribosome-bound tRNAs. The protein is Large ribosomal subunit protein uL5 of Burkholderia vietnamiensis (strain G4 / LMG 22486) (Burkholderia cepacia (strain R1808)).